The primary structure comprises 719 residues: Probable phosphatidylinositol phosphate kinase DDB_G0267588 (719 aa).

The segment at 47–261 is disordered; that stretch reads VFSPIPPPPS…SDSPNRVRLN (215 aa). 2 stretches are compositionally biased toward low complexity: residues 57-77 and 87-104; these read TTDN…TDNT and IENN…PNSI. The span at 107–129 shows a compositional bias: basic and acidic residues; that stretch reads ANKKDSIELEEDKEHSIKRKDGS. Residues 172–184 show a composition bias toward polar residues; sequence FDATNDNHNPQEV. A compositionally biased stretch (low complexity) spans 199–217; that stretch reads TTTTTTTTTTTTSTNSTSN. 2 stretches are compositionally biased toward polar residues: residues 218-228 and 248-261; these read KLPNNGDNTVS and ASGS…VRLN. Thr262 bears the Phosphothreonine mark. Positions 316-718 constitute a PIPK domain; sequence NAVGKSMGTE…RFQEFLSTII (403 aa). The disordered stretch occupies residues 579–638; the sequence is RENEPPSPSLLRSTLEDSSDFESPSMEQSSAGQQQQQRGSGNYDNSGAGRDSTTGGAAPK. The span at 606–619 shows a compositional bias: low complexity; the sequence is QSSAGQQQQQRGSG.

Phosphorylated at Thr-262 by pkgB.

Its function is as follows. May be involved in signaling events that underlie chemotaxis via the chemoattractant-mediated pkgB phosphorylation. This chain is Probable phosphatidylinositol phosphate kinase DDB_G0267588, found in Dictyostelium discoideum (Social amoeba).